Consider the following 279-residue polypeptide: 3-methyl-2-oxobutanoate hydroxymethyltransferase (279 aa).

Mg(2+)-binding residues include D49 and D88. Residues 49–50 (DS), D88, and K118 each bind 3-methyl-2-oxobutanoate. E120 serves as a coordination point for Mg(2+). E187 (proton acceptor) is an active-site residue.

The protein belongs to the PanB family. As to quaternary structure, homodecamer; pentamer of dimers. Requires Mg(2+) as cofactor.

Its subcellular location is the cytoplasm. The catalysed reaction is 3-methyl-2-oxobutanoate + (6R)-5,10-methylene-5,6,7,8-tetrahydrofolate + H2O = 2-dehydropantoate + (6S)-5,6,7,8-tetrahydrofolate. It functions in the pathway cofactor biosynthesis; (R)-pantothenate biosynthesis; (R)-pantoate from 3-methyl-2-oxobutanoate: step 1/2. Its function is as follows. Catalyzes the reversible reaction in which hydroxymethyl group from 5,10-methylenetetrahydrofolate is transferred onto alpha-ketoisovalerate to form ketopantoate. This Agrobacterium fabrum (strain C58 / ATCC 33970) (Agrobacterium tumefaciens (strain C58)) protein is 3-methyl-2-oxobutanoate hydroxymethyltransferase.